The chain runs to 384 residues: Putative sarcosine oxidase (384 aa).

Residue 6-36 (DVVVVGAGIFGSCTAYNCQKIGLKTLLLEQF) coordinates FAD. Residue C315 is modified to S-8alpha-FAD cysteine.

The protein belongs to the MSOX/MTOX family. FAD serves as cofactor.

The catalysed reaction is sarcosine + O2 + H2O = formaldehyde + glycine + H2O2. The chain is Putative sarcosine oxidase from Caenorhabditis elegans.